A 202-amino-acid chain; its full sequence is MQAFIRAHGIILPMNQDHVDTDAIIPQRWLVTVERDGLADGFMGAWRYDEHGQPRPECVLNQPAYQGAAIVLARENYGCGSSREHAVWAHQGYGIRAIVAASYGPIFHENCLKNGLLPVTLPAADVATLMAQALADPGCACEVDLVSQRVIGPDGRAYPFEIDAGRRQLLLEGVDDIDLALARAADIAAFQRRQQQDQPWLA.

It belongs to the LeuD family. LeuD type 1 subfamily. Heterodimer of LeuC and LeuD.

The catalysed reaction is (2R,3S)-3-isopropylmalate = (2S)-2-isopropylmalate. The protein operates within amino-acid biosynthesis; L-leucine biosynthesis; L-leucine from 3-methyl-2-oxobutanoate: step 2/4. Functionally, catalyzes the isomerization between 2-isopropylmalate and 3-isopropylmalate, via the formation of 2-isopropylmaleate. The sequence is that of 3-isopropylmalate dehydratase small subunit 1 from Bordetella pertussis (strain Tohama I / ATCC BAA-589 / NCTC 13251).